Consider the following 165-residue polypeptide: Ribosomal RNA large subunit methyltransferase H (165 aa).

An S-adenosyl-L-methionine-binding site is contributed by Gly-109.

The protein belongs to the RNA methyltransferase RlmH family. As to quaternary structure, homodimer.

The protein localises to the cytoplasm. It carries out the reaction pseudouridine(1915) in 23S rRNA + S-adenosyl-L-methionine = N(3)-methylpseudouridine(1915) in 23S rRNA + S-adenosyl-L-homocysteine + H(+). In terms of biological role, specifically methylates the pseudouridine at position 1915 (m3Psi1915) in 23S rRNA. This is Ribosomal RNA large subunit methyltransferase H from Methylorubrum populi (strain ATCC BAA-705 / NCIMB 13946 / BJ001) (Methylobacterium populi).